Here is a 231-residue protein sequence, read N- to C-terminus: 2,3-bisphosphoglycerate-dependent phosphoglycerate mutase (231 aa).

Residues 8 to 15 (RHGESEWN), 21 to 22 (TG), Arg-60, 87 to 90 (ERHY), Lys-98, 114 to 115 (RR), and 183 to 184 (GN) contribute to the substrate site. Catalysis depends on His-9, which acts as the Tele-phosphohistidine intermediate. Residue Glu-87 is the Proton donor/acceptor of the active site.

This sequence belongs to the phosphoglycerate mutase family. BPG-dependent PGAM subfamily.

The enzyme catalyses (2R)-2-phosphoglycerate = (2R)-3-phosphoglycerate. Its pathway is carbohydrate degradation; glycolysis; pyruvate from D-glyceraldehyde 3-phosphate: step 3/5. Functionally, catalyzes the interconversion of 2-phosphoglycerate and 3-phosphoglycerate. This chain is 2,3-bisphosphoglycerate-dependent phosphoglycerate mutase, found in Streptococcus pyogenes serotype M49 (strain NZ131).